We begin with the raw amino-acid sequence, 505 residues long: Deoxyguanosinetriphosphate triphosphohydrolase (505 aa).

An HD domain is found at 66 to 273 (RLTHSMEVQQ…MEAADDISYC (208 aa)).

It belongs to the dGTPase family. Type 1 subfamily. As to quaternary structure, homotetramer. The cofactor is Mg(2+).

It carries out the reaction dGTP + H2O = 2'-deoxyguanosine + triphosphate + H(+). Functionally, dGTPase preferentially hydrolyzes dGTP over the other canonical NTPs. The chain is Deoxyguanosinetriphosphate triphosphohydrolase from Shigella boydii serotype 4 (strain Sb227).